The following is a 448-amino-acid chain: Fumarate hydratase class II (448 aa).

Substrate contacts are provided by residues 83–85 (SGT), 113–116 (HPND), 123–125 (SSN), and Thr-171. His-172 acts as the Proton donor/acceptor in catalysis. Ser-302 is a catalytic residue. Residues Ser-303 and 308–310 (KVN) each bind substrate.

It belongs to the class-II fumarase/aspartase family. Fumarase subfamily. In terms of assembly, homotetramer.

The protein resides in the cytoplasm. It catalyses the reaction (S)-malate = fumarate + H2O. Its pathway is carbohydrate metabolism; tricarboxylic acid cycle; (S)-malate from fumarate: step 1/1. In terms of biological role, involved in the TCA cycle. Catalyzes the stereospecific interconversion of fumarate to L-malate. The sequence is that of Fumarate hydratase class II from Blochmanniella floridana.